We begin with the raw amino-acid sequence, 150 residues long: Meiotic expression up-regulated protein 15 (150 aa).

This chain is Meiotic expression up-regulated protein 15 (meu15), found in Schizosaccharomyces pombe (strain 972 / ATCC 24843) (Fission yeast).